Reading from the N-terminus, the 123-residue chain is Large ribosomal subunit protein uL14 (123 aa).

Belongs to the universal ribosomal protein uL14 family. Part of the 50S ribosomal subunit. Forms a cluster with proteins L3 and L19. In the 70S ribosome, L14 and L19 interact and together make contacts with the 16S rRNA in bridges B5 and B8.

Functionally, binds to 23S rRNA. Forms part of two intersubunit bridges in the 70S ribosome. This is Large ribosomal subunit protein uL14 from Corynebacterium urealyticum (strain ATCC 43042 / DSM 7109).